The chain runs to 531 residues: UDP-glucuronosyltransferase 2B13 (531 aa).

The N-terminal stretch at 1 to 24 (MPVKCISVLLLLLQLSCCFSSGSC) is a signal peptide. 3 N-linked (GlcNAc...) asparagine glycosylation sites follow: Asn69, Asn101, and Asn317. The helical transmembrane segment at 495 to 511 (VIGFLLACVAITTYLIV) threads the bilayer.

It belongs to the UDP-glycosyltransferase family.

It localises to the microsome membrane. The protein resides in the endoplasmic reticulum membrane. It catalyses the reaction glucuronate acceptor + UDP-alpha-D-glucuronate = acceptor beta-D-glucuronoside + UDP + H(+). In terms of biological role, UDPGT is of major importance in the conjugation and subsequent elimination of potentially toxic xenobiotics and endogenous compounds. Acts on small phenolic agents such as 2-beta-naphthol and 4-methylumbelliferone as well as bulky phenolic compounds like 2-hydroxy- and 4-hydroxybiphenyl. In contrast to 2B16 it is active toward octylgallate. This is UDP-glucuronosyltransferase 2B13 (UGT2B13) from Oryctolagus cuniculus (Rabbit).